Here is a 472-residue protein sequence, read N- to C-terminus: Glutamate--tRNA ligase 1 (472 aa).

The 'HIGH' region signature appears at 9–19; sequence PSPTGLLHVGN. Residues 112–131 are compositionally biased toward basic and acidic residues; that stretch reads AMAEKRPPRYDGTWRDRDPS. The tract at residues 112–133 is disordered; it reads AMAEKRPPRYDGTWRDRDPSEA. The short motif at 238–242 is the 'KMSKS' region element; that stretch reads KLSKR. K241 is an ATP binding site.

It belongs to the class-I aminoacyl-tRNA synthetase family. Glutamate--tRNA ligase type 1 subfamily. In terms of assembly, monomer.

Its subcellular location is the cytoplasm. The enzyme catalyses tRNA(Glu) + L-glutamate + ATP = L-glutamyl-tRNA(Glu) + AMP + diphosphate. Functionally, catalyzes the attachment of glutamate to tRNA(Glu) in a two-step reaction: glutamate is first activated by ATP to form Glu-AMP and then transferred to the acceptor end of tRNA(Glu). This Gluconobacter oxydans (strain 621H) (Gluconobacter suboxydans) protein is Glutamate--tRNA ligase 1.